We begin with the raw amino-acid sequence, 309 residues long: Probable copper-dependent oxygenase clz3 (309 aa).

N9 and N249 each carry an N-linked (GlcNAc...) asparagine glycan. A helical membrane pass occupies residues 257–277; that stretch reads FAVPLAAIAFIALIISGGYVI.

Belongs to the clz3 oxygenase family.

The protein localises to the membrane. Its pathway is secondary metabolite biosynthesis. Probable copper-dependent oxygenase; part of the gene cluster that mediates the biosynthesis of squalestatin S1 (SQS1, also known as zaragozic acid A), a heavily oxidized fungal polyketide that offers potent cholesterol lowering activity by targeting squalene synthase (SS). SQS1 is composed of a 2,8-dioxobicyclic[3.2.1]octane-3,4,5-tricarboxyclic acid core that is connected to two lipophilic polyketide arms. These initial steps feature the priming of an unusual benzoic acid starter unit onto the highly reducing polyketide synthase clz14, followed by oxaloacetate extension and product release to generate a tricarboxylic acid containing product. The phenylalanine ammonia lyase (PAL) clz10 and the acyl-CoA ligase clz12 are involved in transforming phenylalanine into benzoyl-CoA. The citrate synthase-like protein clz17 is involved in connecting the C-alpha-carbons of the hexaketide chain and oxaloacetate to afford the tricarboxylic acid unit. The potential hydrolytic enzymes, clz11 and clz13, are in close proximity to pks2 and may participate in product release. On the other side, the tetraketide arm is synthesized by a the squalestatin tetraketide synthase clz2 and enzymatically esterified to the core in the last biosynthetic step, by the acetyltransferase clz6. The biosynthesis of the tetraketide must involve 3 rounds of chain extension. After the first and second rounds methyl-transfer occurs, and in all rounds of extension the ketoreductase and dehydratase are active. The enoyl reductase and C-MeT of clz2 are not active in the final round of extension. The acetyltransferase clz6 appears to have a broad substrate selectivity for its acyl CoA substrate, allowing the in vitro synthesis of novel squalestatins. The biosynthesis of SQS1 requires several oxidative steps likely performed by oxidoreductases clz3, clz15 and clz16. Finally, in support of the identification of the cluster as being responsible for SQS1 production, the cluster contains a gene encoding a putative squalene synthase (SS) clz20, suggesting a likely mechanism for self-resistance. The polypeptide is Probable copper-dependent oxygenase clz3 (Cochliobolus lunatus (Filamentous fungus)).